A 694-amino-acid polypeptide reads, in one-letter code: U-box domain-containing protein 1 (694 aa).

The U-box domain occupies 292–366; it reads NIPDEFRCPI…HQWCYENNVK (75 aa). ARM repeat units follow at residues 392 to 432, 435 to 474, 476 to 516, 519 to 558, 560 to 599, 601 to 641, and 646 to 685; these read SENK…LLAK, MDNRRIIAEVGAIPFLVTLLVSKDSRIQEHVVTALFNLSI, DNNK…SLSM, DCKVQIGASSRAIPALVGLLKEGTIIGKRDAATALFNLAV, NPNKLSIVKSGAVTLLVELLMDDKAGITDDSLAVLAVLLG, SEGL…GLCK, and LVAMRLLANPRSIPSLQSLAADGSLRARRKADALLRLLNR.

Interacts with LYK3. Binds to NORK/DMI2. Phosphorylated by LYK3 in vitro. Phosphorylated by NORK/DMI2. In terms of tissue distribution, present ubiquitously at very low levels during nonsymbiotic growth. Accumulates in roots and nodules during symbiotic growth with rhizobia and mycorrhiza.

The protein localises to the cell membrane. It catalyses the reaction S-ubiquitinyl-[E2 ubiquitin-conjugating enzyme]-L-cysteine + [acceptor protein]-L-lysine = [E2 ubiquitin-conjugating enzyme]-L-cysteine + N(6)-ubiquitinyl-[acceptor protein]-L-lysine.. The protein operates within protein modification; protein ubiquitination. In terms of biological role, exhibits U-box-dependent E3 ubiquitin ligase activity in vitro. Negatively modulates successive stages of infection and development of rhizobial (e.g. Sinorhizobium meliloti) and arbuscular mycorrhizal fungi (AM, e.g. Rhizophagus irregularis) symbioses, in an ubiquitin ligase activity-dependent manner. Negative regulator of the LYK3 signaling pathway leading to nitrogen-fixing symbiosis (e.g. infection and nodulation) by rhizobia. May be involved in the discrimination of rhizobium strains producing variant Nod factors. This is U-box domain-containing protein 1 from Medicago truncatula (Barrel medic).